We begin with the raw amino-acid sequence, 345 residues long: NADPH dehydrogenase (345 aa).

Position 23–26 (23–26 (SPMC)) interacts with FMN. Tyrosine 28 is a binding site for substrate. Positions 60 and 102 each coordinate FMN. 164 to 167 (HGAH) is a substrate binding site. Residues arginine 215 and 307 to 308 (GR) contribute to the FMN site.

The protein belongs to the NADH:flavin oxidoreductase/NADH oxidase family. NamA subfamily. As to quaternary structure, homotetramer. FMN serves as cofactor.

It catalyses the reaction A + NADPH + H(+) = AH2 + NADP(+). Functionally, catalyzes the reduction of the double bond of an array of alpha,beta-unsaturated aldehydes and ketones. It also reduces the nitro group of nitroester and nitroaromatic compounds. It could have a role in detoxification processes. The chain is NADPH dehydrogenase from Bacillus mycoides (strain KBAB4) (Bacillus weihenstephanensis).